The following is a 370-amino-acid chain: UDP-N-acetylglucosamine--N-acetylmuramyl-(pentapeptide) pyrophosphoryl-undecaprenol N-acetylglucosamine transferase (370 aa).

Residues 15–17 (TGG), N129, R170, S200, I253, and Q298 each bind UDP-N-acetyl-alpha-D-glucosamine.

It belongs to the glycosyltransferase 28 family. MurG subfamily.

It localises to the cell inner membrane. It carries out the reaction di-trans,octa-cis-undecaprenyl diphospho-N-acetyl-alpha-D-muramoyl-L-alanyl-D-glutamyl-meso-2,6-diaminopimeloyl-D-alanyl-D-alanine + UDP-N-acetyl-alpha-D-glucosamine = di-trans,octa-cis-undecaprenyl diphospho-[N-acetyl-alpha-D-glucosaminyl-(1-&gt;4)]-N-acetyl-alpha-D-muramoyl-L-alanyl-D-glutamyl-meso-2,6-diaminopimeloyl-D-alanyl-D-alanine + UDP + H(+). It participates in cell wall biogenesis; peptidoglycan biosynthesis. Its function is as follows. Cell wall formation. Catalyzes the transfer of a GlcNAc subunit on undecaprenyl-pyrophosphoryl-MurNAc-pentapeptide (lipid intermediate I) to form undecaprenyl-pyrophosphoryl-MurNAc-(pentapeptide)GlcNAc (lipid intermediate II). This is UDP-N-acetylglucosamine--N-acetylmuramyl-(pentapeptide) pyrophosphoryl-undecaprenol N-acetylglucosamine transferase from Salinibacter ruber (strain DSM 13855 / M31).